The chain runs to 492 residues: Probable malate:quinone oxidoreductase 1 (492 aa).

It belongs to the MQO family. FAD is required as a cofactor.

It catalyses the reaction (S)-malate + a quinone = a quinol + oxaloacetate. It participates in carbohydrate metabolism; tricarboxylic acid cycle; oxaloacetate from (S)-malate (quinone route): step 1/1. The protein is Probable malate:quinone oxidoreductase 1 of Staphylococcus aureus (strain MRSA252).